The sequence spans 475 residues: Dihydrolipoyl dehydrogenase (475 aa).

FAD contacts are provided by residues 37-46 (EQYYSLGGVC), Lys-55, and Ala-118. A disulfide bridge links Cys-46 with Cys-51. Residues 183–187 (GGGII), Asp-206, Val-239, and 272–275 (AIGR) each bind NAD(+). Residues Asp-315 and Ala-323 each coordinate FAD. His-447 serves as the catalytic Proton acceptor.

Belongs to the class-I pyridine nucleotide-disulfide oxidoreductase family. In terms of assembly, homodimer. FAD serves as cofactor.

It is found in the cytoplasm. The catalysed reaction is N(6)-[(R)-dihydrolipoyl]-L-lysyl-[protein] + NAD(+) = N(6)-[(R)-lipoyl]-L-lysyl-[protein] + NADH + H(+). Lipoamide dehydrogenase is a component of the alpha-ketoacid dehydrogenase complexes. In Buchnera aphidicola subsp. Baizongia pistaciae (strain Bp), this protein is Dihydrolipoyl dehydrogenase (lpdA).